A 212-amino-acid polypeptide reads, in one-letter code: UPF0111 protein PH1389 (212 aa).

This sequence belongs to the UPF0111 family.

The protein is UPF0111 protein PH1389 of Pyrococcus horikoshii (strain ATCC 700860 / DSM 12428 / JCM 9974 / NBRC 100139 / OT-3).